Here is a 254-residue protein sequence, read N- to C-terminus: Peroxisomal membrane protein 11-2 (254 aa).

Residues 1–113 lie on the Cytoplasmic side of the membrane; it reads MVTAAGSPSS…YHPHPHVHPL (113 aa). A helical membrane pass occupies residues 114 to 134; it reads LVLLAYGGQGVYNFLEQFAWL. Residues 135–227 lie on the Lumenal side of the membrane; sequence AKAGLLPARL…TVGDVTGRKG (93 aa). Residues 228 to 247 traverse the membrane as a helical segment; it reads LLGSSTLMASAGLLSALISV. Residues 248–254 are Cytoplasmic-facing; that stretch reads HKNWNSC.

This sequence belongs to the peroxin-11 family.

It is found in the peroxisome membrane. In terms of biological role, involved in peroxisomal proliferation. In Oryza sativa subsp. japonica (Rice), this protein is Peroxisomal membrane protein 11-2 (PEX11-2).